A 251-amino-acid chain; its full sequence is Ubiquinone/menaquinone biosynthesis C-methyltransferase UbiE (251 aa).

S-adenosyl-L-methionine is bound by residues threonine 74, aspartate 95, 123 to 124 (NA), and serine 140.

The protein belongs to the class I-like SAM-binding methyltransferase superfamily. MenG/UbiE family.

It catalyses the reaction a 2-demethylmenaquinol + S-adenosyl-L-methionine = a menaquinol + S-adenosyl-L-homocysteine + H(+). The enzyme catalyses a 2-methoxy-6-(all-trans-polyprenyl)benzene-1,4-diol + S-adenosyl-L-methionine = a 5-methoxy-2-methyl-3-(all-trans-polyprenyl)benzene-1,4-diol + S-adenosyl-L-homocysteine + H(+). The protein operates within quinol/quinone metabolism; menaquinone biosynthesis; menaquinol from 1,4-dihydroxy-2-naphthoate: step 2/2. It functions in the pathway cofactor biosynthesis; ubiquinone biosynthesis. In terms of biological role, methyltransferase required for the conversion of demethylmenaquinol (DMKH2) to menaquinol (MKH2) and the conversion of 2-polyprenyl-6-methoxy-1,4-benzoquinol (DDMQH2) to 2-polyprenyl-3-methyl-6-methoxy-1,4-benzoquinol (DMQH2). The chain is Ubiquinone/menaquinone biosynthesis C-methyltransferase UbiE from Citrobacter koseri (strain ATCC BAA-895 / CDC 4225-83 / SGSC4696).